We begin with the raw amino-acid sequence, 232 residues long: Enolase-phosphatase E1 (232 aa).

Belongs to the HAD-like hydrolase superfamily. MasA/MtnC family. In terms of assembly, monomer. Requires Mg(2+) as cofactor.

It carries out the reaction 5-methylsulfanyl-2,3-dioxopentyl phosphate + H2O = 1,2-dihydroxy-5-(methylsulfanyl)pent-1-en-3-one + phosphate. Its pathway is amino-acid biosynthesis; L-methionine biosynthesis via salvage pathway; L-methionine from S-methyl-5-thio-alpha-D-ribose 1-phosphate: step 3/6. It participates in amino-acid biosynthesis; L-methionine biosynthesis via salvage pathway; L-methionine from S-methyl-5-thio-alpha-D-ribose 1-phosphate: step 4/6. In terms of biological role, bifunctional enzyme that catalyzes the enolization of 2,3-diketo-5-methylthiopentyl-1-phosphate (DK-MTP-1-P) into the intermediate 2-hydroxy-3-keto-5-methylthiopentenyl-1-phosphate (HK-MTPenyl-1-P), which is then dephosphorylated to form the acireductone 1,2-dihydroxy-3-keto-5-methylthiopentene (DHK-MTPene). The protein is Enolase-phosphatase E1 of Acidiphilium cryptum (strain JF-5).